A 163-amino-acid polypeptide reads, in one-letter code: Protein-export protein SecB (163 aa).

The protein belongs to the SecB family. In terms of assembly, homotetramer, a dimer of dimers. One homotetramer interacts with 1 SecA dimer.

It is found in the cytoplasm. Functionally, one of the proteins required for the normal export of preproteins out of the cell cytoplasm. It is a molecular chaperone that binds to a subset of precursor proteins, maintaining them in a translocation-competent state. It also specifically binds to its receptor SecA. The protein is Protein-export protein SecB of Azotobacter vinelandii (strain DJ / ATCC BAA-1303).